Here is a 128-residue protein sequence, read N- to C-terminus: Small ribosomal subunit protein uS11 (128 aa).

Belongs to the universal ribosomal protein uS11 family. In terms of assembly, part of the 30S ribosomal subunit. Interacts with proteins S7 and S18. Binds to IF-3.

Its function is as follows. Located on the platform of the 30S subunit, it bridges several disparate RNA helices of the 16S rRNA. Forms part of the Shine-Dalgarno cleft in the 70S ribosome. In Ligilactobacillus salivarius (strain UCC118) (Lactobacillus salivarius), this protein is Small ribosomal subunit protein uS11.